The sequence spans 151 residues: RNA polymerase-binding transcription factor DksA (151 aa).

Positions 114, 117, 135, and 138 each coordinate Zn(2+). Residues 114–138 (CNSCAVEIGIRRLEARPTANLCIDC) form a dksA C4-type zinc finger.

This sequence belongs to the DksA family. Interacts directly with the RNA polymerase.

It is found in the cytoplasm. In terms of biological role, transcription factor that acts by binding directly to the RNA polymerase (RNAP). Required for negative regulation of rRNA expression and positive regulation of several amino acid biosynthesis promoters. Also required for regulation of fis expression. This Buchnera aphidicola subsp. Schizaphis graminum (strain Sg) protein is RNA polymerase-binding transcription factor DksA.